A 206-amino-acid chain; its full sequence is Small ribosomal subunit protein uS4 (206 aa).

One can recognise an S4 RNA-binding domain in the interval 96–156 (GRLDNVVYRM…EKAKKQSRVK (61 aa)).

This sequence belongs to the universal ribosomal protein uS4 family. In terms of assembly, part of the 30S ribosomal subunit. Contacts protein S5. The interaction surface between S4 and S5 is involved in control of translational fidelity.

Its function is as follows. One of the primary rRNA binding proteins, it binds directly to 16S rRNA where it nucleates assembly of the body of the 30S subunit. Functionally, with S5 and S12 plays an important role in translational accuracy. The polypeptide is Small ribosomal subunit protein uS4 (Serratia proteamaculans (strain 568)).